Here is a 920-residue protein sequence, read N- to C-terminus: Androgen receptor (920 aa).

Residues 1-559 (MEVQLGLGRV…IDYYFPPQKT (559 aa)) form a modulating region. The interval 1-587 (MEVQLGLGRV…GSCKVFFKRA (587 aa)) is interaction with ZNF318. 2 disordered regions span residues 36–167 (NPGP…LSLL) and 195–228 (QQQQ…YLGG). Over residues 44 to 91 (AASAAPPGASLLLLQQQQQQQQQQQQQQQQQQQQQQQETSPRQQQQQQ) the composition is skewed to low complexity. Ser83 is subject to Phosphoserine; by CDK9. Ser96 is subject to Phosphoserine. Positions 195–217 (QQQQQEAVSEGSSSGRAREASGA) are enriched in low complexity. The segment covering 218–228 (PTSSKDNYLGG) has biased composition (polar residues). At Tyr225 the chain carries Phosphotyrosine; by CSK. Ser258 carries the post-translational modification Phosphoserine. Tyr269 is subject to Phosphotyrosine; by CSK and TNK2. Residues Tyr309, Tyr348, Tyr359, and Tyr364 each carry the phosphotyrosine; by CSK modification. At Tyr365 the chain carries Phosphotyrosine; by CSK and TNK2. A Glycyl lysine isopeptide (Lys-Gly) (interchain with G-Cter in SUMO) cross-link involves residue Lys388. Tyr395 carries the post-translational modification Phosphotyrosine; by CSK. A Glycyl lysine isopeptide (Lys-Gly) (interchain with G-Cter in SUMO) cross-link involves residue Lys521. Tyr535 and Tyr552 each carry phosphotyrosine; by CSK. An interaction with LPXN region spans residues 552-919 (YYFPPQKTCL…GKVKPIYFHT (368 aa)). NR C4-type zinc fingers lie at residues 560-580 (CLIC…CGSC) and 596-620 (CASR…LRKC). A DNA-binding region (nuclear receptor) is located at residues 560 to 632 (CLICGDEASG…AGMTLGARKL (73 aa)). Residues 572-662 (YGALTCGSCK…TEETTQKLTV (91 aa)) form an interaction with HIPK3 region. Residues 592-919 (QKYLCASRND…GKVKPIYFHT (328 aa)) are interaction with CCAR1. An interaction with KAT7 region spans residues 625-919 (MTLGARKLKK…GKVKPIYFHT (295 aa)). Phosphoserine; by STK4/MST1 is present on Ser651. The NR LBD domain occupies 669-900 (ECQPIFLNVL…DFPEMMAEII (232 aa)). The 17beta-hydroxy-5alpha-androstan-3-one site is built by Asn706 and Arg753. Residues Lys846 and Lys848 each participate in a glycyl lysine isopeptide (Lys-Gly) (interchain with G-Cter in ubiquitin) cross-link. Thr878 serves as a coordination point for 17beta-hydroxy-5alpha-androstan-3-one. A Phosphotyrosine; by CSK modification is found at Tyr916.

It belongs to the nuclear hormone receptor family. NR3 subfamily. In terms of assembly, binds DNA as a homodimer. Part of a ternary complex containing AR, EFCAB6/DJBP and PARK7. Interacts with HIPK3 and NR0B2 in the presence of androgen. The ligand binding domain interacts with KAT7/HBO1 in the presence of dihydrotestosterone. Interacts with EFCAB6/DJBP, PQBP1, RANBP9, RBAK, SPDEF, SRA1, TGFB1I1 and RREB1. Interacts with ZMIZ1/ZIMP10 and ZMIZ2/ZMIP7 which both enhance its transactivation activity. Interacts with SLC30A9 and RAD54L2/ARIP4. Interacts with MACROD1 (via macro domain). Interacts via the ligand-binding domain with LXXLL and FXXLF motifs from NCOA1, NCOA2, NCOA3 and MAGEA11. Interacts (via nuclear receptor DNA binding domain and nuclear receptor ligand binding domain) with NCOA4. The AR N-terminal poly-Gln region binds Ran resulting in enhancement of AR-mediated transactivation. Ran-binding decreases as the poly-Gln length increases. Interacts with HIP1 (via coiled coil domain). Interacts (via ligand-binding domain) with TRIM68. Interacts with TNK2. Interacts with USP26. Interacts with RNF6. Interacts (regulated by RNF6 probably through polyubiquitination) with RNF14; regulates AR transcriptional activity. Interacts with PRMT2 and TRIM24. Interacts with RACK1. Interacts with RANBP10; this interaction enhances dihydrotestosterone-induced AR transcriptional activity. Interacts with PRPF6 in a hormone-independent way; this interaction enhances dihydrotestosterone-induced AR transcriptional activity. Interacts with STK4/MST1. Interacts with ZIPK/DAPK3. Interacts with LPXN. Interacts with MAK. Part of a complex containing AR, MAK and NCOA3. Interacts with CRY1. Interacts with CCAR1 and GATA2. Interacts with ZNF318. Interacts with BUD31. Interacts with ARID4A. Interacts with ARID4B. Interacts (via NR LBD domain) with ZBTB7A; the interaction is direct and androgen-dependent. Interacts with NCOR1. Interacts with NCOR2. Interacts with CRY2 in a ligand-dependent manner. Sumoylated on Lys-388 (major) and Lys-521. Ubiquitinated. Deubiquitinated by USP26. 'Lys-6' and 'Lys-27'-linked polyubiquitination by RNF6 modulates AR transcriptional activity and specificity. In terms of processing, phosphorylated in prostate cancer cells in response to several growth factors including EGF. Phosphorylation is induced by c-Src kinase (CSK). Tyr-535 is one of the major phosphorylation sites and an increase in phosphorylation and Src kinase activity is associated with prostate cancer progression. Phosphorylation by TNK2 enhances the DNA-binding and transcriptional activity and may be responsible for androgen-independent progression of prostate cancer. Phosphorylation at Ser-83 by CDK9 regulates AR promoter selectivity and cell growth. Phosphorylation by PAK6 leads to AR-mediated transcription inhibition. Post-translationally, palmitoylated by ZDHHC7 and ZDHHC21. Palmitoylation is required for plasma membrane targeting and for rapid intracellular signaling via ERK and AKT kinases and cAMP generation. As to expression, mainly expressed in heart and skeletal muscle. In terms of tissue distribution, expressed in basal and stromal cells of the prostate (at protein level).

The protein localises to the nucleus. The protein resides in the cytoplasm. Its activity is regulated as follows. AIM-100 (4-amino-5,6-biaryl-furo[2,3-d]pyrimidine) suppresses TNK2-mediated phosphorylation at Tyr-269. Inhibits the binding of the Tyr-269 phosphorylated form to androgen-responsive enhancers (AREs) and its transcriptional activity. In terms of biological role, steroid hormone receptors are ligand-activated transcription factors that regulate eukaryotic gene expression and affect cellular proliferation and differentiation in target tissues. Transcription factor activity is modulated by bound coactivator and corepressor proteins like ZBTB7A that recruits NCOR1 and NCOR2 to the androgen response elements/ARE on target genes, negatively regulating androgen receptor signaling and androgen-induced cell proliferation. Transcription activation is also down-regulated by NR0B2. Activated, but not phosphorylated, by HIPK3 and ZIPK/DAPK3. Its function is as follows. Lacks the C-terminal ligand-binding domain and may therefore constitutively activate the transcription of a specific set of genes independently of steroid hormones. The chain is Androgen receptor (AR) from Homo sapiens (Human).